Reading from the N-terminus, the 414-residue chain is Riboflavin biosynthesis protein RibBA (414 aa).

Residues 1–204 (MTRFDTIERA…IADMIAWRRK (204 aa)) form a DHBP synthase region. Residues 28 to 29 (RE), D33, 141 to 145 (RPGHT), and E165 each bind D-ribulose 5-phosphate. Position 29 (E29) interacts with Mg(2+). H144 contributes to the Mg(2+) binding site. The GTP cyclohydrolase II stretch occupies residues 205–414 (HEKQVVRVAE…DDLDLGETAQ (210 aa)). Position 255–259 (255–259 (RVHSE)) interacts with GTP. Zn(2+) is bound by residues C260, C271, and C273. GTP-binding positions include Q276, 299 to 301 (EGR), and T321. D333 serves as the catalytic Proton acceptor; for GTP cyclohydrolase activity. The Nucleophile; for GTP cyclohydrolase activity role is filled by R335. Positions 356 and 361 each coordinate GTP.

In the N-terminal section; belongs to the DHBP synthase family. The protein in the C-terminal section; belongs to the GTP cyclohydrolase II family. Mg(2+) is required as a cofactor. It depends on Mn(2+) as a cofactor. The cofactor is Zn(2+).

The catalysed reaction is D-ribulose 5-phosphate = (2S)-2-hydroxy-3-oxobutyl phosphate + formate + H(+). The enzyme catalyses GTP + 4 H2O = 2,5-diamino-6-hydroxy-4-(5-phosphoribosylamino)-pyrimidine + formate + 2 phosphate + 3 H(+). It functions in the pathway cofactor biosynthesis; riboflavin biosynthesis; 2-hydroxy-3-oxobutyl phosphate from D-ribulose 5-phosphate: step 1/1. Its pathway is cofactor biosynthesis; riboflavin biosynthesis; 5-amino-6-(D-ribitylamino)uracil from GTP: step 1/4. Functionally, catalyzes the conversion of D-ribulose 5-phosphate to formate and 3,4-dihydroxy-2-butanone 4-phosphate. In terms of biological role, catalyzes the conversion of GTP to 2,5-diamino-6-ribosylamino-4(3H)-pyrimidinone 5'-phosphate (DARP), formate and pyrophosphate. In Nocardia farcinica (strain IFM 10152), this protein is Riboflavin biosynthesis protein RibBA.